The primary structure comprises 298 residues: Inosose dehydratase (298 aa).

This sequence belongs to the IolE/MocC family. It depends on glutathione as a cofactor. Co(2+) is required as a cofactor. Mn(2+) serves as cofactor.

It carries out the reaction scyllo-inosose = 3D-3,5/4-trihydroxycyclohexane-1,2-dione + H2O. Functionally, catalyzes the dehydration of inosose (2-keto-myo-inositol, 2KMI or 2,4,6/3,5-pentahydroxycyclohexanone) to 3D-(3,5/4)-trihydroxycyclohexane-1,2-dione (D-2,3-diketo-4-deoxy-epi-inositol). The sequence is that of Inosose dehydratase from Yersinia enterocolitica serotype O:8 / biotype 1B (strain NCTC 13174 / 8081).